The primary structure comprises 202 residues: N-(5'-phosphoribosyl)anthranilate isomerase (202 aa).

This sequence belongs to the TrpF family.

It catalyses the reaction N-(5-phospho-beta-D-ribosyl)anthranilate = 1-(2-carboxyphenylamino)-1-deoxy-D-ribulose 5-phosphate. It functions in the pathway amino-acid biosynthesis; L-tryptophan biosynthesis; L-tryptophan from chorismate: step 3/5. The chain is N-(5'-phosphoribosyl)anthranilate isomerase from Geobacter metallireducens (strain ATCC 53774 / DSM 7210 / GS-15).